A 359-amino-acid polypeptide reads, in one-letter code: 3-dehydroquinate synthase (359 aa).

NAD(+) contacts are provided by residues 72 to 77 (EGEIHK), 106 to 110 (GVIGD), 130 to 131 (TS), lysine 143, lysine 152, and 170 to 173 (CLKT). Zn(2+) contacts are provided by glutamate 185, histidine 248, and histidine 264.

This sequence belongs to the sugar phosphate cyclases superfamily. Dehydroquinate synthase family. Co(2+) serves as cofactor. Zn(2+) is required as a cofactor. The cofactor is NAD(+).

It is found in the cytoplasm. It carries out the reaction 7-phospho-2-dehydro-3-deoxy-D-arabino-heptonate = 3-dehydroquinate + phosphate. It participates in metabolic intermediate biosynthesis; chorismate biosynthesis; chorismate from D-erythrose 4-phosphate and phosphoenolpyruvate: step 2/7. Its function is as follows. Catalyzes the conversion of 3-deoxy-D-arabino-heptulosonate 7-phosphate (DAHP) to dehydroquinate (DHQ). This Dehalococcoides mccartyi (strain ATCC BAA-2266 / KCTC 15142 / 195) (Dehalococcoides ethenogenes (strain 195)) protein is 3-dehydroquinate synthase.